The chain runs to 523 residues: MPEMGALLLATQAMAAPGELLNLSLNASAVLPEGAVLLAMIATLLVDLAGEKVAARWVPPICYIGLGSALVLLALQWNAPLEPSFLGAFLADNLAVAFRAVIATSTLLSLLISWRYAEKSGTPVGEYAAILLAATLGAMLLCGATDLVSIFISLETLSVASYLLSGYMKRDARSSEAALKYLLVGSAAAAVFLYGASLLYGLSGSTSLEVIGVALQTSTTPIAALSLVFVLATVAFKIAAVPFHQWTPDVYEGSPTPVVAFLSVGSKAAGFALALRILVGCFGAFDDQWKLLFTVLAVLSMTLGNVVALAQTSMKRMLAYSSIGQAGFVMIGMVCGTEDGFAAMVLYMAAYLFMNLGAFACIILFSIRTGSDRISDYAGLYQKDPLITLGLSLCLLSLGGIPPMLGFFGKIYLFFAGWANHEYLLVVVGLITSVISIYYYISVIKMMVVKEPHEASDVVKNYPDVDWSLMGMQPLRVALIGCVGVTAIGGILSNPLFQWANEAVAETPLLQQAIALVGERGLG.

13 helical membrane passes run 29-49 (AVLP…VDLA), 57-77 (WVPP…ALQW), 94-114 (LAVA…LISW), 132-152 (LAAT…SIFI), 182-202 (LLVG…LYGL), 221-241 (PIAA…IAAV), 255-275 (PTPV…ALAL), 291-311 (LLFT…ALAQ), 317-337 (MLAY…VCGT), 345-365 (VLYM…IILF), 389-409 (LGLS…GFFG), 424-444 (LLVV…ISVI), and 477-497 (VALI…NPLF).

This sequence belongs to the complex I subunit 2 family. In terms of assembly, NDH-1 can be composed of about 15 different subunits; different subcomplexes with different compositions have been identified which probably have different functions.

The protein resides in the cellular thylakoid membrane. The catalysed reaction is a plastoquinone + NADH + (n+1) H(+)(in) = a plastoquinol + NAD(+) + n H(+)(out). It catalyses the reaction a plastoquinone + NADPH + (n+1) H(+)(in) = a plastoquinol + NADP(+) + n H(+)(out). In terms of biological role, NDH-1 shuttles electrons from an unknown electron donor, via FMN and iron-sulfur (Fe-S) centers, to quinones in the respiratory and/or the photosynthetic chain. The immediate electron acceptor for the enzyme in this species is believed to be plastoquinone. Couples the redox reaction to proton translocation, and thus conserves the redox energy in a proton gradient. Cyanobacterial NDH-1 also plays a role in inorganic carbon-concentration. This is NAD(P)H-quinone oxidoreductase subunit 2 from Synechococcus sp. (strain CC9902).